Here is a 501-residue protein sequence, read N- to C-terminus: Lysine--tRNA ligase (501 aa).

Mg(2+) contacts are provided by E412 and E419.

Belongs to the class-II aminoacyl-tRNA synthetase family. Homodimer. Requires Mg(2+) as cofactor.

It is found in the cytoplasm. The enzyme catalyses tRNA(Lys) + L-lysine + ATP = L-lysyl-tRNA(Lys) + AMP + diphosphate. In Pasteurella multocida (strain Pm70), this protein is Lysine--tRNA ligase (lysS).